A 253-amino-acid polypeptide reads, in one-letter code: Imidazole glycerol phosphate synthase subunit HisF (253 aa).

Residues Asp-11 and Asp-130 contribute to the active site.

It belongs to the HisA/HisF family. In terms of assembly, heterodimer of HisH and HisF.

Its subcellular location is the cytoplasm. The enzyme catalyses 5-[(5-phospho-1-deoxy-D-ribulos-1-ylimino)methylamino]-1-(5-phospho-beta-D-ribosyl)imidazole-4-carboxamide + L-glutamine = D-erythro-1-(imidazol-4-yl)glycerol 3-phosphate + 5-amino-1-(5-phospho-beta-D-ribosyl)imidazole-4-carboxamide + L-glutamate + H(+). It participates in amino-acid biosynthesis; L-histidine biosynthesis; L-histidine from 5-phospho-alpha-D-ribose 1-diphosphate: step 5/9. IGPS catalyzes the conversion of PRFAR and glutamine to IGP, AICAR and glutamate. The HisF subunit catalyzes the cyclization activity that produces IGP and AICAR from PRFAR using the ammonia provided by the HisH subunit. The sequence is that of Imidazole glycerol phosphate synthase subunit HisF from Acetivibrio thermocellus (strain ATCC 27405 / DSM 1237 / JCM 9322 / NBRC 103400 / NCIMB 10682 / NRRL B-4536 / VPI 7372) (Clostridium thermocellum).